The following is a 240-amino-acid chain: ATP synthase subunit a 1 (240 aa).

A run of 5 helical transmembrane segments spans residues 23–43 (GQVL…SVLA), 82–102 (VPFI…GALF), 120–140 (DINT…YAGF), 186–206 (LVVA…VMLL), and 207–227 (GLFT…AYIH).

It belongs to the ATPase A chain family. In terms of assembly, F-type ATPases have 2 components, CF(1) - the catalytic core - and CF(0) - the membrane proton channel. CF(1) has five subunits: alpha(3), beta(3), gamma(1), delta(1), epsilon(1). CF(0) has four main subunits: a, b, b' and c.

The protein resides in the cellular thylakoid membrane. Key component of the proton channel; it plays a direct role in the translocation of protons across the membrane. The polypeptide is ATP synthase subunit a 1 (Acaryochloris marina (strain MBIC 11017)).